Here is a 559-residue protein sequence, read N- to C-terminus: MVKSDIEIAQAAEELPITDVAAKLGLTSQDLEPYGYDKAKVNWQAIKRSEENGHLGKMILVTSISPTPAGEGKSTMTIGIGDAINNQLGKKTVIALREPSMGPVFGMKGGAAGGGYAQVIPMEDINLHFTGDMHALTSAIDNLSALVDNYIYQGNELGLDPEKIVIKRGLDVNDRTLRKVTIGQGSKFNGVERPASFQLTVGHELMAILCLSKDIADLKERIGKVLVGYTYEDEPVFVKDLGFQGAIAALLSTALKPNLVQTLEHTPAFVHGGPFANIAHGNNSILSTNLALHLSDYVLSEAGFGSDLGGQKFLDFVSTKLEKKPDAAVVVATVRALKYQAEKSTDHLKEENLDSLKEGFANLDRHMNNVRSYNIPVLVVINKFPTDTEAELDLLKSLIEEQGFPCEIVTAHDEGSKGAKAAAEKIVELADKSDYEIKRSYDLDDDLETKIEKVAKRIYHAADVEYTDKAKDQLVKLKKMGKDKLPVIIAKTQYSFTDNVKELGAPTGFTLHVKGLSLRNGAGFVVVSTGHILDMPGLPKHPAALDIDVDETGKISGLF.

67-74 (TPAGEGKS) contacts ATP.

This sequence belongs to the formate--tetrahydrofolate ligase family.

The enzyme catalyses (6S)-5,6,7,8-tetrahydrofolate + formate + ATP = (6R)-10-formyltetrahydrofolate + ADP + phosphate. It functions in the pathway one-carbon metabolism; tetrahydrofolate interconversion. In Lactobacillus delbrueckii subsp. bulgaricus (strain ATCC BAA-365 / Lb-18), this protein is Formate--tetrahydrofolate ligase.